The following is a 63-amino-acid chain: Small ribosomal subunit protein bS21 (63 aa).

The segment covering 40–52 (KPSVKRKLKSEAA) has biased composition (basic and acidic residues). Residues 40–63 (KPSVKRKLKSEAARKRKNKRGRRY) form a disordered region. Over residues 53 to 63 (RKRKNKRGRRY) the composition is skewed to basic residues.

Belongs to the bacterial ribosomal protein bS21 family.

The chain is Small ribosomal subunit protein bS21 from Limosilactobacillus reuteri (strain DSM 20016) (Lactobacillus reuteri).